The chain runs to 283 residues: Elongation factor Ts (283 aa).

Residues 79-82 (TDFV) form an involved in Mg(2+) ion dislocation from EF-Tu region.

It belongs to the EF-Ts family.

It localises to the cytoplasm. Associates with the EF-Tu.GDP complex and induces the exchange of GDP to GTP. It remains bound to the aminoacyl-tRNA.EF-Tu.GTP complex up to the GTP hydrolysis stage on the ribosome. This is Elongation factor Ts from Shewanella amazonensis (strain ATCC BAA-1098 / SB2B).